A 556-amino-acid chain; its full sequence is Urocanate hydratase (556 aa).

Residues 52–53, Gln-130, 176–178, Glu-196, Arg-201, 242–243, 263–267, 273–274, and Tyr-322 contribute to the NAD(+) site; these read GG, GMG, NA, QTSAH, and YL. The active site involves Cys-410. Gly-492 provides a ligand contact to NAD(+).

It belongs to the urocanase family. NAD(+) serves as cofactor.

Its subcellular location is the cytoplasm. It carries out the reaction 4-imidazolone-5-propanoate = trans-urocanate + H2O. Its pathway is amino-acid degradation; L-histidine degradation into L-glutamate; N-formimidoyl-L-glutamate from L-histidine: step 2/3. Catalyzes the conversion of urocanate to 4-imidazolone-5-propionate. This Shewanella frigidimarina (strain NCIMB 400) protein is Urocanate hydratase.